We begin with the raw amino-acid sequence, 151 residues long: Small ribosomal subunit protein uS13 (151 aa).

A disordered region spans residues 131-151; that stretch reads RGQRTKSSFRRGRTVGVKKKQ. Residues 133–151 show a composition bias toward basic residues; it reads QRTKSSFRRGRTVGVKKKQ.

This sequence belongs to the universal ribosomal protein uS13 family. In terms of assembly, part of the 30S ribosomal subunit. Forms a loose heterodimer with protein S19. Forms two bridges to the 50S subunit in the 70S ribosome.

Located at the top of the head of the 30S subunit, it contacts several helices of the 16S rRNA. In the 70S ribosome it contacts the 23S rRNA (bridge B1a) and protein L5 of the 50S subunit (bridge B1b), connecting the 2 subunits; these bridges are implicated in subunit movement. This is Small ribosomal subunit protein uS13 from Methanopyrus kandleri (strain AV19 / DSM 6324 / JCM 9639 / NBRC 100938).